The sequence spans 485 residues: Aspartyl/glutamyl-tRNA(Asn/Gln) amidotransferase subunit B (485 aa).

Belongs to the GatB/GatE family. GatB subfamily. As to quaternary structure, heterotrimer of A, B and C subunits.

It catalyses the reaction L-glutamyl-tRNA(Gln) + L-glutamine + ATP + H2O = L-glutaminyl-tRNA(Gln) + L-glutamate + ADP + phosphate + H(+). The enzyme catalyses L-aspartyl-tRNA(Asn) + L-glutamine + ATP + H2O = L-asparaginyl-tRNA(Asn) + L-glutamate + ADP + phosphate + 2 H(+). Functionally, allows the formation of correctly charged Asn-tRNA(Asn) or Gln-tRNA(Gln) through the transamidation of misacylated Asp-tRNA(Asn) or Glu-tRNA(Gln) in organisms which lack either or both of asparaginyl-tRNA or glutaminyl-tRNA synthetases. The reaction takes place in the presence of glutamine and ATP through an activated phospho-Asp-tRNA(Asn) or phospho-Glu-tRNA(Gln). The protein is Aspartyl/glutamyl-tRNA(Asn/Gln) amidotransferase subunit B of Methylacidiphilum infernorum (isolate V4) (Methylokorus infernorum (strain V4)).